A 204-amino-acid chain; its full sequence is MGAYKYLEELWRKKQSDLMSFILRLRTWEYRQLPVIHKASRSSRPDKARKLGYKNKDGYAIWRVRVRRGGRKRPVSKGIVYGKPSSVGINQLKFARNLRSCAEERVGKRVPELRVLNSYWVGQDGTYKFYEVILADPSHNAIRNDPRINWICESAHKHRELRGLTSAGRKGRGLRVKGHRAKSLRTSRKGNWRARQMLKLRRYR.

Belongs to the eukaryotic ribosomal protein eL15 family.

In Tetrahymena thermophila (strain SB210), this protein is Large ribosomal subunit protein eL15 (RPL15).